The primary structure comprises 562 residues: Nucleoprotein (562 aa).

The segment at 53 to 238 is binding site for the cap structure m7GTP; sequence MRRDKRDESD…ITQEESQINI (186 aa). Aspartate 381 and glutamate 383 together coordinate Mn(2+). Glutamate 391, cysteine 498, histidine 501, and cysteine 522 together coordinate Zn(2+). Aspartate 526 provides a ligand contact to Mn(2+).

The protein belongs to the arenaviridae nucleocapsid protein family. In terms of assembly, homomultimerizes to form the nucleocapsid. Binds to viral genomic RNA. Interacts with glycoprotein G2. Interacts with protein Z; this interaction probably directs the encapsidated genome to budding sites. Interacts with protein L; this interaction does not interfere with Z-L interaction. Interacts with host IKBKE (via Protein kinase domain); the interaction inhibits IKBKE kinase activity.

It localises to the virion. The protein localises to the host cytoplasm. Its function is as follows. Encapsidates the genome, protecting it from nucleases. The encapsidated genomic RNA is termed the nucleocapsid (NC). Serves as template for viral transcription and replication. The increased presence of protein N in host cell does not seem to trigger the switch from transcription to replication as observed in other negative strain RNA viruses. Through the interaction with host IKBKE, strongly inhibits the phosphorylation and nuclear translocation of host IRF3, a protein involved in interferon activation pathway, leading to the inhibition of interferon-beta and IRF3-dependent promoters activation. Also encodes a functional 3'-5' exoribonuclease that degrades preferentially dsRNA substrates and thereby participates in the suppression of interferon induction. The chain is Nucleoprotein from Bear Canyon mammarenavirus (isolate Mouse/United States/AV A0070039/2000) (BCNV).